The chain runs to 69 residues: Pancreatic secretory trypsin inhibitor (69 aa).

Positions 8–65 (TGTEAACSNYDLKKGCAKIFDPVCGTDNILYSNECLLCFQNLQRKTNVRIKRRGTCQE) constitute a Kazal-like domain. 3 disulfides stabilise this stretch: Cys14-Cys45, Cys23-Cys42, and Cys31-Cys63.

The protein localises to the secreted. In terms of biological role, this is a trypsin inhibitor, its physiological function is to prevent the trypsin-catalyzed premature activation of zymogens within the pancreas. This chain is Pancreatic secretory trypsin inhibitor (SPINK1), found in Struthio camelus (Common ostrich).